Here is a 1828-residue protein sequence, read N- to C-terminus: Unconventional myosin-Va (1828 aa).

A2 carries the post-translational modification N-acetylalanine. In terms of domain architecture, Myosin N-terminal SH3-like spans 8-60; that stretch reads TKFARVWIPDPEEVWKSAELLKDYKPGDKVLLLHLEEGKDLEYRLDPKTSELP. The region spanning 69–763 is the Myosin motor domain; it reads VGENDLTALS…QVAYLEKLRA (695 aa). 163 to 170 contacts ATP; that stretch reads GESGAGKT. Positions 599 to 633 are disordered; the sequence is ISPTSATSSGRTPLTRVPVKPTKGRPGQTAKEHKK. S600 carries the post-translational modification Phosphoserine. Residues 600–610 are compositionally biased toward polar residues; that stretch reads SPTSATSSGRT. The segment at 643–665 is actin-binding; it reads LHLLMETLNATTPHYVRCIKPND. IQ domains are found at residues 766 to 788, 789 to 813, 814 to 836, 837 to 861, 862 to 884, and 885 to 914; these read LRAACIRIQKTIRGWLLRKRYLC, MQRAAITVQRYVRGYQARCYAKFLR, RTKAATTIQKYWRMYVVRRKYKI, RRAATIVLQSYLRGYLARNRYRKIL, REHKAVIIQKRVRGWLARTHYKR, and TMKAIIYLQCCFRRMMAKRELKKLKIEARS. Coiled coils occupy residues 914-1239 and 1314-1418; these read SVER…EVNA and GLKE…ELEV. Residue T1032 is modified to Phosphothreonine. Positions 1105–1147 are disordered; the sequence is VPKPGHKRTDSTHSSNESEYTFSSEFAETEDIAPRTEEPTEKK. The segment covering 1116-1130 has biased composition (polar residues); sequence THSSNESEYTFSSEF. Residues 1136–1147 show a composition bias toward basic and acidic residues; sequence IAPRTEEPTEKK. 2 positions are modified to phosphoserine: S1425 and S1625. The 277-residue stretch at 1507–1783 folds into the Dilute domain; it reads TSTINSIKKV…IRTIQVRLRD (277 aa). Residue T1733 is modified to Phosphothreonine.

The protein belongs to the TRAFAC class myosin-kinesin ATPase superfamily. Myosin family. As to quaternary structure, may be a homodimer, which associates with multiple calmodulin or myosin light chains. Interacts with RIPL2, the interaction is required for its role in dendrite formation. Interacts with MLPH. Interacts with SYTL4. Interacts with MYRIP. Interacts with RAB10; mediates the transport to the plasma membrane of SLC2A4/GLUT4 storage vesicles. Interacts with FMR1; this interaction occurs in association with polyribosome.

The enzyme catalyses ATP + H2O = ADP + phosphate + H(+). Functionally, processive actin-based motor that can move in large steps approximating the 36-nm pseudo-repeat of the actin filament. Can hydrolyze ATP in the presence of actin, which is essential for its function as a motor protein. Involved in melanosome transport. Also mediates the transport of vesicles to the plasma membrane. May also be required for some polarization process involved in dendrite formation. This chain is Unconventional myosin-Va (Myo5a), found in Rattus norvegicus (Rat).